Reading from the N-terminus, the 190-residue chain is Threonylcarbamoyl-AMP synthase (190 aa).

The YrdC-like domain occupies 8–190; the sequence is RFRIRQCAAR…DAESGAVIRA (183 aa).

The protein belongs to the SUA5 family. TsaC subfamily.

The protein resides in the cytoplasm. It catalyses the reaction L-threonine + hydrogencarbonate + ATP = L-threonylcarbamoyladenylate + diphosphate + H2O. Functionally, required for the formation of a threonylcarbamoyl group on adenosine at position 37 (t(6)A37) in tRNAs that read codons beginning with adenine. Catalyzes the conversion of L-threonine, HCO(3)(-)/CO(2) and ATP to give threonylcarbamoyl-AMP (TC-AMP) as the acyladenylate intermediate, with the release of diphosphate. In Alkalilimnicola ehrlichii (strain ATCC BAA-1101 / DSM 17681 / MLHE-1), this protein is Threonylcarbamoyl-AMP synthase.